Consider the following 24-residue polypeptide: U1-poneritoxin-Na1a (24 aa).

Belongs to the non-disulfide-bridged peptide (NDBP) superfamily. Medium-length antimicrobial peptide (group 3) family. Ponericin-W subfamily. In terms of tissue distribution, expressed by the venom gland.

It localises to the secreted. The protein localises to the target cell membrane. In terms of biological role, has a broad spectrum of activity against both Gram-positive and Gram-negative bacteria and S.cerevisiae. Has insecticidal and hemolytic activities. May act by disrupting the integrity of the bacterial cell membrane. This Neoponera apicalis (Ant) protein is U1-poneritoxin-Na1a.